A 717-amino-acid polypeptide reads, in one-letter code: Pentatricopeptide repeat-containing protein At1g53600, mitochondrial (717 aa).

The N-terminal 47 residues, 1–47, are a transit peptide targeting the mitochondrion; that stretch reads MVMRPISNKGLIYRHNICLRCNSTLAVSNHEPITQKTRNFLETTTTS. PPR repeat units lie at residues 49–79, 80–110, 111–142, 143–173, 176–206, 207–241, 242–272, 274–308, 309–339, 340–374, 375–401, 402–436, 437–471, 472–502, 503–537, 538–568, and 574–604; these read AIFQ…MSNR, SIVS…MPVR, VTTS…IPEK, NAVS…TPVK, DSVA…MAVK, EVVS…NVIT, WTAM…GDVK, NSNT…PLEF, DLFL…MKNK, DSVS…DMVS, WTDM…MPEK, DNIT…EVCP, NSYT…NIVN, DLSV…ISEP, NIVS…GKEP, NGVT…MKSS, and GPDH…MPCK. A type E motif region spans residues 609 to 684; that stretch reads VWGSLLSASK…DPGSSWIILK (76 aa). A type E(+) motif region spans residues 685–715; sequence GEVHNFLAGDESQLNLEEIGFTLKMIRKEME.

It belongs to the PPR family. PCMP-E subfamily.

The protein resides in the mitochondrion. The sequence is that of Pentatricopeptide repeat-containing protein At1g53600, mitochondrial (PCMP-E63) from Arabidopsis thaliana (Mouse-ear cress).